Here is a 478-residue protein sequence, read N- to C-terminus: Spindle defective protein 3 (478 aa).

Over 1-24 (MDQMTVEEKILEHQELEDGSSSFR) the chain is Cytoplasmic. Residues 25–45 (WLVSSTVIAIGGATVALYISG) form a helical membrane-spanning segment. Residues 46-52 (KIDWKIP) lie on the Extracellular side of the membrane. Residues 53 to 73 (AIEAGLALTAGGTITCGYLWF) form a helical membrane-spanning segment. Over 74–478 (KKRVKTVRKL…LRRVDDDIIE (405 aa)) the chain is Cytoplasmic.

It is found in the mitochondrion. The protein localises to the mitochondrion outer membrane. In the first mitotic division in embryos, required for mitotic spindle alignment and asymmetric cell division. Required for motor-driven chromosome movement and homolog searching within the nucleus, and subsequently ensures homologous chromosome pairing during the prophase stage of meiosis. This Caenorhabditis elegans protein is Spindle defective protein 3.